Reading from the N-terminus, the 447-residue chain is Glycogen synthase (447 aa).

Arg15 contributes to the ADP-alpha-D-glucose binding site.

This sequence belongs to the glycosyltransferase 1 family. Bacterial/plant glycogen synthase subfamily.

The catalysed reaction is [(1-&gt;4)-alpha-D-glucosyl](n) + ADP-alpha-D-glucose = [(1-&gt;4)-alpha-D-glucosyl](n+1) + ADP + H(+). It participates in glycan biosynthesis; glycogen biosynthesis. Its function is as follows. Synthesizes alpha-1,4-glucan chains using ADP-glucose. The chain is Glycogen synthase from Deinococcus geothermalis (strain DSM 11300 / CIP 105573 / AG-3a).